The primary structure comprises 471 residues: Trimethyllysine dioxygenase (471 aa).

Histidine 251 and aspartate 253 together coordinate Fe cation. The tract at residues 272–302 (KAAPSRPPPPPPPPPPPSEEKEAAGSAAGEA) is disordered. The segment covering 276–288 (SRPPPPPPPPPPP) has biased composition (pro residues). Histidine 430 is a binding site for Fe cation.

Belongs to the gamma-BBH/TMLD family. Fe(2+) is required as a cofactor. Requires L-ascorbate as cofactor.

The protein resides in the cytoplasm. It catalyses the reaction N(6),N(6),N(6)-trimethyl-L-lysine + 2-oxoglutarate + O2 = (3S)-3-hydroxy-N(6),N(6),N(6)-trimethyl-L-lysine + succinate + CO2. The protein operates within amine and polyamine biosynthesis; carnitine biosynthesis. Its function is as follows. Converts trimethyllysine (TML) into hydroxytrimethyllysine (HTML). In Neurospora crassa (strain ATCC 24698 / 74-OR23-1A / CBS 708.71 / DSM 1257 / FGSC 987), this protein is Trimethyllysine dioxygenase (cbs-1).